Here is a 32-residue protein sequence, read N- to C-terminus: Photosystem I reaction center subunit XII (32 aa).

Residues 10 to 27 (VVALISALVTGILALRLG) traverse the membrane as a helical segment.

This sequence belongs to the PsaM family.

It localises to the plastid. It is found in the chloroplast thylakoid membrane. The chain is Photosystem I reaction center subunit XII from Zygnema circumcarinatum (Green alga).